The primary structure comprises 183 residues: Capsid protein (183 aa).

The segment at 136–183 is disordered; sequence NAPILSTLPETTVVRRRGRSPRRRTPSPRRRRSQSPRRRRSQSRESQC. Basic residues predominate over residues 149–176; sequence VRRRGRSPRRRTPSPRRRRSQSPRRRRS. Residues serine 155, serine 162, and serine 170 each carry the phosphoserine; by host modification. The 1; half-length repeat unit spans residues 155-161; it reads SPRRRTP. Positions 155–177 are 3 X 8 AA repeats of S-P-R-R-R-[PR]-S-Q; sequence SPRRRTPSPRRRRSQSPRRRRSQ. The Bipartite nuclear localization signal signature appears at 158–175; it reads RRTPSPRRRRSQSPRRRR. Repeat copies occupy residues 162–169 and 170–177. Positions 177–183 are RNA binding; the sequence is QSRESQC.

It belongs to the orthohepadnavirus core antigen family. Homodimerizes, then multimerizes. Interacts with cytosol exposed regions of viral L glycoprotein present in the reticulum-to-Golgi compartment. Interacts with human FLNB. Phosphorylated form interacts with host importin alpha; this interaction depends on the exposure of the NLS, which itself depends upon genome maturation and/or phosphorylation of the capsid protein. Interacts with host NUP153. In terms of processing, phosphorylated by host SRPK1, SRPK2, and maybe protein kinase C or GAPDH. Phosphorylation is critical for pregenomic RNA packaging. Protein kinase C phosphorylation is stimulated by HBx protein and may play a role in transport of the viral genome to the nucleus at the late step during the viral replication cycle.

The protein resides in the virion. It localises to the host cytoplasm. Functionally, self assembles to form an icosahedral capsid. Most capsids appear to be large particles with an icosahedral symmetry of T=4 and consist of 240 copies of capsid protein, though a fraction forms smaller T=3 particles consisting of 180 capsid proteins. Entering capsids are transported along microtubules to the nucleus. Phosphorylation of the capsid is thought to induce exposure of nuclear localization signal in the C-terminal portion of the capsid protein that allows binding to the nuclear pore complex via the importin (karyopherin-) alpha and beta. Capsids are imported in intact form through the nuclear pore into the nuclear basket, where it probably binds NUP153. Only capsids that contain the mature viral genome can release the viral DNA and capsid protein into the nucleoplasm. Immature capsids get stuck in the basket. Capsids encapsulate the pre-genomic RNA and the P protein. Pre-genomic RNA is reverse-transcribed into DNA while the capsid is still in the cytoplasm. The capsid can then either be directed to the nucleus, providing more genomes for transcription, or bud through the endoplasmic reticulum to provide new virions. The protein is Capsid protein of Hepatitis B virus genotype D subtype ayw (isolate Italy/CI/1992) (HBV-D).